The following is an 89-amino-acid chain: Small ribosomal subunit protein uS15c (89 aa).

This sequence belongs to the universal ribosomal protein uS15 family. Part of the 30S ribosomal subunit.

The protein localises to the plastid. It is found in the organellar chromatophore. The sequence is that of Small ribosomal subunit protein uS15c (rps15) from Paulinella chromatophora.